Consider the following 91-residue polypeptide: Small ribosomal subunit protein uS19 (91 aa).

This sequence belongs to the universal ribosomal protein uS19 family.

Protein S19 forms a complex with S13 that binds strongly to the 16S ribosomal RNA. The sequence is that of Small ribosomal subunit protein uS19 from Delftia acidovorans (strain DSM 14801 / SPH-1).